Consider the following 213-residue polypeptide: Cytochrome b6 (213 aa).

Residues 30-50 (IFYCLGGLTLLCFIIQCLTGV) traverse the membrane as a helical segment. C33 contacts heme c. Heme b contacts are provided by H84 and H98. Transmembrane regions (helical) follow at residues 88–108 (CQLM…TGAF), 114–134 (LNWV…FTGY), and 184–204 (LHVM…FIMI). 2 residues coordinate heme b: H185 and H200.

The protein belongs to the cytochrome b family. PetB subfamily. In terms of assembly, the subunits of the cytochrome bc complex are a Rieske Fe-S protein (PetC), cytochrome b6 (PetB), subunit IV (PetD), and a diheme cytochrome c (PetX). It depends on heme b as a cofactor. Heme c serves as cofactor.

Its subcellular location is the cell membrane. In terms of biological role, component of the cytochrome bc complex which donates electrons to the photosynthetic reaction center. The polypeptide is Cytochrome b6 (Heliobacterium modesticaldum (strain ATCC 51547 / Ice1)).